Here is a 328-residue protein sequence, read N- to C-terminus: Tetraacyldisaccharide 4'-kinase (328 aa).

Residue 55–62 (TAGGNGKT) participates in ATP binding.

It belongs to the LpxK family.

It carries out the reaction a lipid A disaccharide + ATP = a lipid IVA + ADP + H(+). It functions in the pathway glycolipid biosynthesis; lipid IV(A) biosynthesis; lipid IV(A) from (3R)-3-hydroxytetradecanoyl-[acyl-carrier-protein] and UDP-N-acetyl-alpha-D-glucosamine: step 6/6. Functionally, transfers the gamma-phosphate of ATP to the 4'-position of a tetraacyldisaccharide 1-phosphate intermediate (termed DS-1-P) to form tetraacyldisaccharide 1,4'-bis-phosphate (lipid IVA). The chain is Tetraacyldisaccharide 4'-kinase from Escherichia coli O139:H28 (strain E24377A / ETEC).